Reading from the N-terminus, the 94-residue chain is Co-chaperonin GroES (94 aa).

In terms of assembly, heptamer of 7 subunits arranged in a ring. Interacts with the chaperonin GroEL.

The protein localises to the cytoplasm. Functionally, together with the chaperonin GroEL, plays an essential role in assisting protein folding. The GroEL-GroES system forms a nano-cage that allows encapsulation of the non-native substrate proteins and provides a physical environment optimized to promote and accelerate protein folding. GroES binds to the apical surface of the GroEL ring, thereby capping the opening of the GroEL channel. This chain is Co-chaperonin GroES, found in Thermoanaerobacter brockii (Thermoanaerobium brockii).